The chain runs to 265 residues: Undecaprenyl-diphosphatase (265 aa).

The next 8 membrane-spanning stretches (helical) occupy residues 14-34, 40-60, 79-99, 112-132, 141-161, 182-202, 217-237, and 242-262; these read GLGE…PWLF, SLVF…VYFW, GKLF…GYLF, LLIA…DSIA, MNVF…FPGI, AKFS…VSLL, IGFF…LGIV, and FKIF…FYLL.

The protein belongs to the UppP family.

It localises to the cell membrane. It catalyses the reaction di-trans,octa-cis-undecaprenyl diphosphate + H2O = di-trans,octa-cis-undecaprenyl phosphate + phosphate + H(+). Its function is as follows. Catalyzes the dephosphorylation of undecaprenyl diphosphate (UPP). Confers resistance to bacitracin. This Caldicellulosiruptor bescii (strain ATCC BAA-1888 / DSM 6725 / KCTC 15123 / Z-1320) (Anaerocellum thermophilum) protein is Undecaprenyl-diphosphatase.